The sequence spans 155 residues: DNA gyrase inhibitor (155 aa).

Belongs to the DNA gyrase inhibitor family. In terms of assembly, interacts with DNA gyrase.

The protein resides in the cytoplasm. Inhibits the supercoiling activity of DNA gyrase. Acts by inhibiting DNA gyrase at an early step, prior to (or at the step of) binding of DNA by the gyrase. It protects cells against toxins that target DNA gyrase, by inhibiting activity of these toxins and reducing the formation of lethal double-strand breaks in the cell. The polypeptide is DNA gyrase inhibitor (Salmonella typhi).